The primary structure comprises 469 residues: RuvB-like helicase 2 (469 aa).

Residue 74 to 81 (GPPSTGKT) participates in ATP binding.

This sequence belongs to the RuvB family. May form heterododecamers with RVB1. Component of the SWR1 chromatin remodeling complex, the INO80 chromatin remodeling complex, and of the R2TP complex.

It is found in the nucleus. It catalyses the reaction ATP + H2O = ADP + phosphate + H(+). DNA helicase which participates in several chromatin remodeling complexes, including the SWR1 and the INO80 complexes. The SWR1 complex mediates the ATP-dependent exchange of histone H2A for the H2A variant HZT1 leading to transcriptional regulation of selected genes by chromatin remodeling. The INO80 complex remodels chromatin by shifting nucleosomes and is involved in DNA repair. Also involved in pre-rRNA processing. The sequence is that of RuvB-like helicase 2 (RVB2) from Eremothecium gossypii (strain ATCC 10895 / CBS 109.51 / FGSC 9923 / NRRL Y-1056) (Yeast).